The sequence spans 190 residues: Orotate phosphoribosyltransferase (190 aa).

114–122 lines the 5-phospho-alpha-D-ribose 1-diphosphate pocket; that stretch reads EDVITTGGS. Thr-118 and Arg-146 together coordinate orotate.

Belongs to the purine/pyrimidine phosphoribosyltransferase family. PyrE subfamily. Homodimer. Requires Mg(2+) as cofactor.

The enzyme catalyses orotidine 5'-phosphate + diphosphate = orotate + 5-phospho-alpha-D-ribose 1-diphosphate. Its pathway is pyrimidine metabolism; UMP biosynthesis via de novo pathway; UMP from orotate: step 1/2. Its function is as follows. Catalyzes the transfer of a ribosyl phosphate group from 5-phosphoribose 1-diphosphate to orotate, leading to the formation of orotidine monophosphate (OMP). The chain is Orotate phosphoribosyltransferase from Caldicellulosiruptor bescii (strain ATCC BAA-1888 / DSM 6725 / KCTC 15123 / Z-1320) (Anaerocellum thermophilum).